Here is a 349-residue protein sequence, read N- to C-terminus: MRIEEDIKLGFKDVLIRPKRSILKSRSQVNLARCFSFKYSASIWSGIPIIAANMDTIGTFEMVKSLSKFNILTAVHKYYSFEEWKNFVCLSSKEILNHVIVSIGTSNIDFLKIKKIFLLSSELKYICIDVANGYSEHIVSFLKLVRDYFPDKIICAGNVVTGEMVEELILSGADIVKVGIGPGSVCTTRVKTGVGYPQLSAIIECADAAHGLNGQIISDGGCTVSGDIAKAFGGGADFVMLGGMLSGHKECSGDIIEEKSKKYMIFYGMSSVSAMQRYEGKIAGYRASEGKTVKIPFRGGVDSTIRDILGGLRSSCTYVGAEKLKELTKRTTFIRVTEQENCIFNAFKE.

108–131 (IDFLKIKKIFLLSSELKYICIDVA) is a binding site for NADP(+). 2 residues coordinate K(+): G181 and G183. Catalysis depends on C186, which acts as the Thioimidate intermediate. 216-239 (IISDGGCTVSGDIAKAFGGGADFV) lines the NADP(+) pocket.

It belongs to the IMPDH/GMPR family. GuaC type 1 subfamily. In terms of assembly, homotetramer.

The enzyme catalyses IMP + NH4(+) + NADP(+) = GMP + NADPH + 2 H(+). Its function is as follows. Catalyzes the irreversible NADPH-dependent deamination of GMP to IMP. It functions in the conversion of nucleobase, nucleoside and nucleotide derivatives of G to A nucleotides, and in maintaining the intracellular balance of A and G nucleotides. The polypeptide is GMP reductase (Buchnera aphidicola subsp. Acyrthosiphon pisum (strain 5A)).